Here is a 214-residue protein sequence, read N- to C-terminus: Probable nicotinate-nucleotide adenylyltransferase (214 aa).

This sequence belongs to the NadD family.

It carries out the reaction nicotinate beta-D-ribonucleotide + ATP + H(+) = deamido-NAD(+) + diphosphate. Its pathway is cofactor biosynthesis; NAD(+) biosynthesis; deamido-NAD(+) from nicotinate D-ribonucleotide: step 1/1. Catalyzes the reversible adenylation of nicotinate mononucleotide (NaMN) to nicotinic acid adenine dinucleotide (NaAD). In Rhodopirellula baltica (strain DSM 10527 / NCIMB 13988 / SH1), this protein is Probable nicotinate-nucleotide adenylyltransferase.